The sequence spans 178 residues: DELTA-miturgitoxin-Cp3a (178 aa).

A signal peptide spans Met-1–Ser-18. The propeptide occupies Glu-19–Arg-46. The Processing quadruplet motif signature appears at Glu-43–Arg-46. 8 disulfides stabilise this stretch: Cys-48/Cys-63, Cys-55/Cys-72, Cys-62/Cys-86, Cys-74/Cys-84, Cys-113/Cys-128, Cys-120/Cys-137, Cys-127/Cys-155, and Cys-139/Cys-153.

This sequence belongs to the spider toxin CSTX family. Double-CSTX subfamily. In terms of processing, cleavage of the propeptide depends on the processing quadruplet motif (XXXR, with at least one of X being E). Expressed by the venom gland.

Its subcellular location is the secreted. Spider venom toxin that exhibits cytolytic activity by forming an alpha-helix across the membrane. Lethal to insect larvae. In Cheiracanthium punctorium (Yellow sac spider), this protein is DELTA-miturgitoxin-Cp3a.